The following is a 229-amino-acid chain: Putative N-acetylmannosamine-6-phosphate 2-epimerase (229 aa).

Belongs to the NanE family.

It catalyses the reaction an N-acyl-D-glucosamine 6-phosphate = an N-acyl-D-mannosamine 6-phosphate. It participates in amino-sugar metabolism; N-acetylneuraminate degradation; D-fructose 6-phosphate from N-acetylneuraminate: step 3/5. Functionally, converts N-acetylmannosamine-6-phosphate (ManNAc-6-P) to N-acetylglucosamine-6-phosphate (GlcNAc-6-P). The polypeptide is Putative N-acetylmannosamine-6-phosphate 2-epimerase (Cutibacterium acnes (strain DSM 16379 / KPA171202) (Propionibacterium acnes)).